A 726-amino-acid chain; its full sequence is Dipeptidyl-peptidase 5 (726 aa).

The signal sequence occupies residues 1–19 (MAAAKWLIASLAFASSGLA). Residues Asn-96 and Asn-252 are each glycosylated (N-linked (GlcNAc...) asparagine). The segment at 269 to 291 (AEPINKRNGPRTPQGIEGASSSP) is disordered. Catalysis depends on Ser-558, which acts as the Charge relay system. 2 N-linked (GlcNAc...) asparagine glycosylation sites follow: Asn-605 and Asn-638. Active-site charge relay system residues include Asp-641 and His-673. An N-linked (GlcNAc...) asparagine glycan is attached at Asn-699.

It belongs to the peptidase S9C family.

Its subcellular location is the secreted. The sequence is that of Dipeptidyl-peptidase 5 (DPPV) from Trichophyton schoenleinii.